A 171-amino-acid chain; its full sequence is O-acetyl-ADP-ribose deacetylase 2 (171 aa).

The region spanning 1 to 171 (MNKITVIQGD…NYDLYLKLLN (171 aa)) is the Macro domain. Residues 10–11 (DI), Asn24, 32–34 (GVD), and 121–125 (STGIY) contribute to the substrate site. The active-site Proton acceptor is the Asp34.

The protein belongs to the MacroD-type family. YmdB subfamily. In terms of assembly, homodimer. Interacts with RNase III.

The catalysed reaction is 3''-O-acetyl-ADP-D-ribose + H2O = ADP-D-ribose + acetate + H(+). It catalyses the reaction 2''-O-acetyl-ADP-D-ribose + H2O = ADP-D-ribose + acetate + H(+). Deacetylates O-acetyl-ADP ribose to yield ADP-ribose and free acetate. Down-regulates ribonuclease 3 (RNase III) activity. Acts by interacting directly with the region of the ribonuclease that is required for dimerization/activation. This Pantoea vagans (strain C9-1) (Pantoea agglomerans (strain C9-1)) protein is O-acetyl-ADP-ribose deacetylase 2.